Here is a 218-residue protein sequence, read N- to C-terminus: Trimethylamine corrinoid protein 2 (218 aa).

The 92-residue stretch at 1–92 (MAGKEEIIAK…EMEKRKSQTK (92 aa)) folds into the B12-binding N-terminal domain. One can recognise a B12-binding domain in the interval 94 to 218 (LGTVIIGTIE…AKVKAALKVG (125 aa)). Position 107 (His-107) interacts with methylcob(III)alamin.

The protein belongs to the methylamine corrinoid protein family. In terms of assembly, can form a complex with MttB.

It functions in the pathway one-carbon metabolism; methanogenesis from trimethylamine. Functionally, acts probably as a methyl group carrier between MttB and either MtbA or MtaA. This chain is Trimethylamine corrinoid protein 2 (mttC2), found in Methanosarcina mazei (strain ATCC BAA-159 / DSM 3647 / Goe1 / Go1 / JCM 11833 / OCM 88) (Methanosarcina frisia).